The chain runs to 147 residues: Large ribosomal subunit protein bL9 (147 aa).

It belongs to the bacterial ribosomal protein bL9 family.

Binds to the 23S rRNA. The polypeptide is Large ribosomal subunit protein bL9 (Phocaeicola vulgatus (strain ATCC 8482 / DSM 1447 / JCM 5826 / CCUG 4940 / NBRC 14291 / NCTC 11154) (Bacteroides vulgatus)).